A 348-amino-acid chain; its full sequence is Calcium-gated potassium channel TvoK (348 aa).

Transmembrane regions (helical) follow at residues 19 to 39, 52 to 72, and 80 to 100; these read LTKV…LEFL, YFTA…GDVV, and VVAM…TATI. The RCK N-terminal domain occupies 120–246; sequence KNHTIICNWN…VSAGATEVLS (127 aa). An RCK C-terminal domain is found at 266–348; sequence DFILKSLSET…KKEVEEAIKG (83 aa).

In terms of assembly, heterooctamer composed of four full-length subunits and four soluble RCK domains.

The protein localises to the cell membrane. In terms of biological role, calcium-gated potassium channel. Can also be activated by Mg(2+), Mn(2+) and Ni(2+). This is Calcium-gated potassium channel TvoK from Thermoplasma volcanium (strain ATCC 51530 / DSM 4299 / JCM 9571 / NBRC 15438 / GSS1).